The sequence spans 210 residues: Somatotropin-1 (210 aa).

Residues 1-22 (MGQVFLLMPVLLASCFLSQGAA) form the signal peptide. His-38 lines the Zn(2+) pocket. A disulfide bridge links Cys-71 with Cys-183. Glu-192 serves as a coordination point for Zn(2+). Residues Cys-200 and Cys-208 are joined by a disulfide bond.

It belongs to the somatotropin/prolactin family.

It localises to the secreted. Growth hormone plays an important role in growth control and is involved in the regulation of several anabolic processes. Implicated as an osmoregulatory substance important for seawater adaptation. The sequence is that of Somatotropin-1 (gh1) from Oncorhynchus nerka (Sockeye salmon).